The sequence spans 1320 residues: Clustered mitochondria protein homolog (1320 aa).

Disordered regions lie at residues 166-241 (QQLE…KQKM), 552-582 (YGSMDTPTNEEEEQQQKEENEENKNNNTKSI), and 683-708 (LKEKEERQKKEGIDPPTATARDEDVQ). Over residues 185-194 (TEDKEEKETI) the composition is skewed to basic and acidic residues. Basic residues predominate over residues 202 to 213 (KKNKHHNKKGNK). 3 stretches are compositionally biased toward basic and acidic residues: residues 226-241 (NEEKLTPQQKERKQKM), 565-575 (QQQKEENEENK), and 683-695 (LKEKEERQKKEGI). One can recognise a Clu domain in the interval 379–649 (KTNRYDINKG…KATPRDPNYT (271 aa)). TPR repeat units lie at residues 955 to 988 (GLDLLEAGKTFFNQRKYELATELLGEALAIYHQV), 997 to 1030 (GACFTHLAMLAYQNEQYDLAIEYQKNALVITEKT), 1039 to 1072 (VQAYTTLAVFCQRSGRYNESIGYMKHVLYLTDLL), 1081 to 1114 (ASIYTAIAAILEDTERFDLALEFLKQTLKHQEFL), and 1123 to 1156 (STTYHKMAIVCARATNFDDSIIHQKKSTDILEKE). The tract at residues 1204–1320 (KADQFKKSQP…SKPNKKSSKN (117 aa)) is disordered. Basic residues predominate over residues 1237–1247 (KPKKSQSKKSK). Positions 1248 to 1311 (STNTTTTTNT…PTSSSAADSS (64 aa)) are enriched in low complexity.

This sequence belongs to the CLU family.

It is found in the cytoplasm. MRNA-binding protein involved in proper cytoplasmic distribution of mitochondria. In Dictyostelium discoideum (Social amoeba), this protein is Clustered mitochondria protein homolog.